The primary structure comprises 156 residues: Small ribosomal subunit protein uS7 (156 aa).

Belongs to the universal ribosomal protein uS7 family. Part of the 30S ribosomal subunit. Contacts proteins S9 and S11.

Its function is as follows. One of the primary rRNA binding proteins, it binds directly to 16S rRNA where it nucleates assembly of the head domain of the 30S subunit. Is located at the subunit interface close to the decoding center, probably blocks exit of the E-site tRNA. This Streptomyces coelicolor (strain ATCC BAA-471 / A3(2) / M145) protein is Small ribosomal subunit protein uS7 (rspG).